The chain runs to 211 residues: Potassium-transporting ATPase KdpC subunit (211 aa).

Residues 13 to 35 traverse the membrane as a helical segment; that stretch reads VVTMVLTGLLYPLAVTGLAQLLF.

It belongs to the KdpC family. As to quaternary structure, the system is composed of three essential subunits: KdpA, KdpB and KdpC.

It is found in the cell membrane. In terms of biological role, part of the high-affinity ATP-driven potassium transport (or Kdp) system, which catalyzes the hydrolysis of ATP coupled with the electrogenic transport of potassium into the cytoplasm. This subunit acts as a catalytic chaperone that increases the ATP-binding affinity of the ATP-hydrolyzing subunit KdpB by the formation of a transient KdpB/KdpC/ATP ternary complex. This Myxococcus xanthus protein is Potassium-transporting ATPase KdpC subunit.